Reading from the N-terminus, the 577-residue chain is MNIQALLSEKVSQAMIAAGAPADCEPQVRQSAKVQFGDYQANGMMAVAKKLGMAPRQLAEQVLTHLDLSGIASKVEIAGPGFINIFLEPAFLAEQVQQALASDRLGVSQPTRQTIVVDYSAPNVAKEMHVGHLRSTIIGDAAVRTLEFLGHHVIRANHVGDWGTQFGMLIAWLEKQQQENAGDMALADLEGFYRDAKKHYDEDEAFAERARNYVVKLQSGDTYFREMWRKLVDITMTQNQITYDRLNVTLTRDDVMGESLYNPMLPGIVADLKAKGLAVESEGATVVFLDEFKNKEGDPMGVIIQKKDGGYLYTTTDIACAKYRYETLHADRVLYYIDSRQHQHLMQAWTIVRKAGYVPDSVPLEHHMFGMMLGKDGKPFKTRAGGTVKLADLLDEALERARRLVAEKNPDMPADELEKLANAVGIGAVKYADLSKNRTTDYIFDWDNMLAFEGNTAPYMQYAYTRVLSVFRKADIDEQALASAPVIISEDREAQLAARLLQFEETLTVVAREGTPHVMCAYLYDVAGLFSGFYEHCPILSAENDAVRNSRLKLAQLTAKTLKLGLDTLGIETVERM.

The 'HIGH' region motif lies at 122–132; it reads PNVAKEMHVGH.

The protein belongs to the class-I aminoacyl-tRNA synthetase family. As to quaternary structure, monomer.

It is found in the cytoplasm. It catalyses the reaction tRNA(Arg) + L-arginine + ATP = L-arginyl-tRNA(Arg) + AMP + diphosphate. The sequence is that of Arginine--tRNA ligase from Salmonella newport (strain SL254).